The sequence spans 197 residues: Imidazoleglycerol-phosphate dehydratase (197 aa).

This sequence belongs to the imidazoleglycerol-phosphate dehydratase family.

Its subcellular location is the cytoplasm. It catalyses the reaction D-erythro-1-(imidazol-4-yl)glycerol 3-phosphate = 3-(imidazol-4-yl)-2-oxopropyl phosphate + H2O. It participates in amino-acid biosynthesis; L-histidine biosynthesis; L-histidine from 5-phospho-alpha-D-ribose 1-diphosphate: step 6/9. This is Imidazoleglycerol-phosphate dehydratase from Pseudomonas putida (strain ATCC 700007 / DSM 6899 / JCM 31910 / BCRC 17059 / LMG 24140 / F1).